The sequence spans 450 residues: MSQQHTLPVTLPPTLSQELLKNVSPPADIQQEQRKQPTPLPAPCQKVLSELPVAVPSKHEEKHATPVKGLLEQECGQLQQQEPQEQEVHLAKHQELQELQEQELHLGKQPEPQEQELHLGKQQQQQESQEQELYLGKQPEPQDQELHLGKQQAPQEQELHLGKQPEPQEQELHLGKQPEPQDQELYLGKRLEPQEQELHLGKQQQQQESQEQELDLGKQPEPQDQELHLGKQQAPQEQELHLGKQPEPQEQELHLVKQQEPQDQELHLGKRLEPQEQELHLGKQQQPQEQKLHPGEAAAAGVTGAGPAASKAARRATGAGTAPGKAAAAAGATGAGTAATAPATAEERQKAESLEQQLEQEKAQREEQLKEQLEEKKRILDQQLDQEVAKRYEQLGVKKEQLLQPLGQQEGQLEKPVFVPAPGQVQDIQPPQPPKGEVLLPAEQQQEPEV.

Positions 1 to 19 (MSQQHTLPVTLPPTLSQEL) are enriched in polar residues. Disordered regions lie at residues 1 to 43 (MSQQ…LPAP), 77 to 370 (QLQQ…EQLK), and 422 to 450 (PGQV…EPEV). A compositionally biased stretch (basic and acidic residues) spans 86 to 108 (QEVHLAKHQELQELQEQELHLGK). Residues 120–135 (GKQQQQQESQEQELYL) show a composition bias toward low complexity. 2 stretches are compositionally biased toward basic and acidic residues: residues 187-200 (LGKR…ELHL) and 264-281 (QELH…ELHL). Positions 295 to 344 (GEAAAAGVTGAGPAASKAARRATGAGTAPGKAAAAAGATGAGTAATAPAT) are enriched in low complexity. Positions 345–370 (AEERQKAESLEQQLEQEKAQREEQLK) are enriched in basic and acidic residues.

It belongs to the involucrin family. Directly or indirectly cross-linked to cornifelin (CNFN). In terms of processing, substrate of transglutaminase. Specific glutamines or lysines are cross-linked to keratins, desmoplakin and to inter involucrin molecules. Keratinocytes of epidermis and other stratified squamous epithelia.

The protein resides in the cytoplasm. Part of the insoluble cornified cell envelope (CE) of stratified squamous epithelia. This Lemur catta (Ring-tailed lemur) protein is Involucrin (IVL).